Reading from the N-terminus, the 179-residue chain is Ribosome maturation factor RimM (179 aa).

The PRC barrel domain maps to 100-176; the sequence is KEEFHLLELI…FVIINPPNGL (77 aa).

The protein belongs to the RimM family. As to quaternary structure, binds ribosomal protein uS19.

The protein resides in the cytoplasm. Functionally, an accessory protein needed during the final step in the assembly of 30S ribosomal subunit, possibly for assembly of the head region. Essential for efficient processing of 16S rRNA. May be needed both before and after RbfA during the maturation of 16S rRNA. It has affinity for free ribosomal 30S subunits but not for 70S ribosomes. The polypeptide is Ribosome maturation factor RimM (Prochlorococcus marinus (strain MIT 9301)).